The primary structure comprises 439 residues: Ribosomal protein uS12 methylthiotransferase RimO (439 aa).

The MTTase N-terminal domain occupies 3-118 (KKFYITTLGC…AGKILREKFP (116 aa)). 6 residues coordinate [4Fe-4S] cluster: cysteine 12, cysteine 48, cysteine 81, cysteine 157, cysteine 161, and cysteine 164. Residues 143–370 (NYSKPYAYVK…RDVHLAILEE (228 aa)) form the Radical SAM core domain. The TRAM domain occupies 373–438 (ESRIGQTYDA…EYDMNGTWIS (66 aa)).

This sequence belongs to the methylthiotransferase family. RimO subfamily. [4Fe-4S] cluster serves as cofactor.

Its subcellular location is the cytoplasm. The enzyme catalyses L-aspartate(89)-[ribosomal protein uS12]-hydrogen + (sulfur carrier)-SH + AH2 + 2 S-adenosyl-L-methionine = 3-methylsulfanyl-L-aspartate(89)-[ribosomal protein uS12]-hydrogen + (sulfur carrier)-H + 5'-deoxyadenosine + L-methionine + A + S-adenosyl-L-homocysteine + 2 H(+). Its function is as follows. Catalyzes the methylthiolation of an aspartic acid residue of ribosomal protein uS12. The chain is Ribosomal protein uS12 methylthiotransferase RimO from Leptospira borgpetersenii serovar Hardjo-bovis (strain L550).